Consider the following 381-residue polypeptide: Sulfate/thiosulfate import ATP-binding protein CysA (381 aa).

Residues 3–233 (ILVYEVSKSL…PIDYFVGIFS (231 aa)) form the ABC transporter domain. Residue 35-42 (GPSGSGKS) participates in ATP binding.

Belongs to the ABC transporter superfamily. Sulfate/tungstate importer (TC 3.A.1.6) family.

It is found in the plastid. The protein resides in the chloroplast. It catalyses the reaction sulfate(out) + ATP + H2O = sulfate(in) + ADP + phosphate + H(+). The enzyme catalyses thiosulfate(out) + ATP + H2O = thiosulfate(in) + ADP + phosphate + H(+). Its function is as follows. Part of the ABC transporter complex involved in sulfate/thiosulfate import. Responsible for energy coupling to the transport system. The sequence is that of Sulfate/thiosulfate import ATP-binding protein CysA from Anthoceros angustus (Hornwort).